We begin with the raw amino-acid sequence, 227 residues long: 7-cyano-7-deazaguanine synthase (227 aa).

Residue phenylalanine 16–leucine 26 coordinates ATP. Residues cysteine 194, cysteine 202, cysteine 205, and cysteine 208 each contribute to the Zn(2+) site.

The protein belongs to the QueC family. It depends on Zn(2+) as a cofactor.

It carries out the reaction 7-carboxy-7-deazaguanine + NH4(+) + ATP = 7-cyano-7-deazaguanine + ADP + phosphate + H2O + H(+). It participates in purine metabolism; 7-cyano-7-deazaguanine biosynthesis. Its function is as follows. Catalyzes the ATP-dependent conversion of 7-carboxy-7-deazaguanine (CDG) to 7-cyano-7-deazaguanine (preQ(0)). The chain is 7-cyano-7-deazaguanine synthase from Haemophilus influenzae (strain PittEE).